The following is a 545-amino-acid chain: MLQDKGLSESEEAFRAPGPALGEASAANAPEPALAAPGLSGAALGSPPGPGADVVAAAAAEQTIENIKVGLHEKELWKKFHEAGTEMIITKAGRRMFPSYKVKVTGMNPKTKYILLIDIVPADDHRYKFCDNKWMVAGKAEPAMPGRLYVHPDSPATGAHWMRQLVSFQKLKLTNNHLDPFGHIILNSMHKYQPRLHIVKADENNAFGSKNTAFCTHVFPETSFISVTSYQNHKITQLKIENNPFAKGFRGSDDSDLRVARLQSKEYPVISKSIMRQRLISPQLSATPDVGPLLGTHQALQHYQHENGAHSQLAEPQDLPLSTFPTQRDSSLFYHCLKRRDGTRHLDLPCKRSYLEAPSSVGEDHYFRSPPPYDQQMLSPSYCSEVTPREACMYSGSGPEIAGVSGVDDLPPPPLSCNMWTSVSPYTSYSVQTMETVPYQPFPTHFTATTMMPRLPTLSAQSSQPPGNAHFSVYNQLSQSQVRERGPSASFPRERGLPQGCERKPPSPHLNAANEFLYSQTFSLSRESSLQYHSGMGTVENWTDG.

The T-box DNA-binding region spans 71–251 (LHEKELWKKF…NNPFAKGFRG (181 aa)). The segment at 479–509 (QSQVRERGPSASFPRERGLPQGCERKPPSPH) is disordered. Basic and acidic residues predominate over residues 482-505 (VRERGPSASFPRERGLPQGCERKP). Ser507 bears the Phosphoserine mark.

Its subcellular location is the nucleus. Transcriptional regulator that has an essential role in the organogenesis of lungs, pelvis, and hindlimbs. The protein is T-box transcription factor TBX4 (TBX4) of Homo sapiens (Human).